Here is a 79-residue protein sequence, read N- to C-terminus: Acyl carrier protein (79 aa).

Residues 1–76 (MSLEDDVIAI…DVFTYIKKRQ (76 aa)) form the Carrier domain. Ser36 is modified (O-(pantetheine 4'-phosphoryl)serine).

It belongs to the acyl carrier protein (ACP) family. Post-translationally, 4'-phosphopantetheine is transferred from CoA to a specific serine of apo-ACP by AcpS. This modification is essential for activity because fatty acids are bound in thioester linkage to the sulfhydryl of the prosthetic group.

It is found in the cytoplasm. Its pathway is lipid metabolism; fatty acid biosynthesis. Functionally, carrier of the growing fatty acid chain in fatty acid biosynthesis. The polypeptide is Acyl carrier protein (Chlamydia pneumoniae (Chlamydophila pneumoniae)).